The chain runs to 328 residues: tRNA(Ile)-lysidine synthase (328 aa).

Residue serine 35–serine 40 coordinates ATP.

The protein belongs to the tRNA(Ile)-lysidine synthase family.

It localises to the cytoplasm. It catalyses the reaction cytidine(34) in tRNA(Ile2) + L-lysine + ATP = lysidine(34) in tRNA(Ile2) + AMP + diphosphate + H(+). In terms of biological role, ligates lysine onto the cytidine present at position 34 of the AUA codon-specific tRNA(Ile) that contains the anticodon CAU, in an ATP-dependent manner. Cytidine is converted to lysidine, thus changing the amino acid specificity of the tRNA from methionine to isoleucine. The polypeptide is tRNA(Ile)-lysidine synthase (Polaromonas naphthalenivorans (strain CJ2)).